Consider the following 420-residue polypeptide: Gamma-glutamyl phosphate reductase (420 aa).

It belongs to the gamma-glutamyl phosphate reductase family.

The protein localises to the cytoplasm. The catalysed reaction is L-glutamate 5-semialdehyde + phosphate + NADP(+) = L-glutamyl 5-phosphate + NADPH + H(+). The protein operates within amino-acid biosynthesis; L-proline biosynthesis; L-glutamate 5-semialdehyde from L-glutamate: step 2/2. Functionally, catalyzes the NADPH-dependent reduction of L-glutamate 5-phosphate into L-glutamate 5-semialdehyde and phosphate. The product spontaneously undergoes cyclization to form 1-pyrroline-5-carboxylate. This is Gamma-glutamyl phosphate reductase from Oenococcus oeni (strain ATCC BAA-331 / PSU-1).